Here is an 82-residue protein sequence, read N- to C-terminus: MGSFSIWHWLIVLLIVVMVFGTKKLKNIGSDLGGAVKGFKDGMKDGASTDDSATTSAPAGQVTNNSTAADKTTIDVEAKHKS.

The helical transmembrane segment at 1–21 (MGSFSIWHWLIVLLIVVMVFG) threads the bilayer. The segment at 46–82 (GASTDDSATTSAPAGQVTNNSTAADKTTIDVEAKHKS) is disordered. Over residues 49-70 (TDDSATTSAPAGQVTNNSTAAD) the composition is skewed to polar residues. The segment covering 72 to 82 (TTIDVEAKHKS) has biased composition (basic and acidic residues).

The protein belongs to the TatA/E family. As to quaternary structure, the Tat system comprises two distinct complexes: a TatABC complex, containing multiple copies of TatA, TatB and TatC subunits, and a separate TatA complex, containing only TatA subunits. Substrates initially bind to the TatABC complex, which probably triggers association of the separate TatA complex to form the active translocon.

It localises to the cell inner membrane. Functionally, part of the twin-arginine translocation (Tat) system that transports large folded proteins containing a characteristic twin-arginine motif in their signal peptide across membranes. TatA could form the protein-conducting channel of the Tat system. The protein is Sec-independent protein translocase protein TatA of Acidovorax sp. (strain JS42).